Reading from the N-terminus, the 306-residue chain is Extensin (306 aa).

An N-terminal signal peptide occupies residues 1-32 (MGRIARGSKMSSLIVSLLVVLVSLNLASETTA). Positions 33–306 (KYTYSSPPPP…YTSPPPPHHY (274 aa)) are disordered. 4 stretches are compositionally biased toward pro residues: residues 38-122 (SPPP…PKHS), 133-152 (SPPP…PKHS), 183-214 (SPPP…PKHS), and 225-290 (SPPP…SPPP).

Hydroxylated on proline residues in the S-P-P-P-P repeat. In terms of processing, O-glycosylated on hydroxyprolines.

It is found in the secreted. The protein localises to the primary cell wall. Its function is as follows. Structural component in primary cell wall. The polypeptide is Extensin (Daucus carota (Wild carrot)).